A 246-amino-acid polypeptide reads, in one-letter code: Probable transcriptional regulatory protein CA_C2295 (246 aa).

It belongs to the TACO1 family.

Its subcellular location is the cytoplasm. In Clostridium acetobutylicum (strain ATCC 824 / DSM 792 / JCM 1419 / IAM 19013 / LMG 5710 / NBRC 13948 / NRRL B-527 / VKM B-1787 / 2291 / W), this protein is Probable transcriptional regulatory protein CA_C2295.